The following is an 855-amino-acid chain: DNA mismatch repair protein MutS (855 aa).

ATP is bound at residue 616–623 (GPNMGGKS).

This sequence belongs to the DNA mismatch repair MutS family.

Functionally, this protein is involved in the repair of mismatches in DNA. It is possible that it carries out the mismatch recognition step. This protein has a weak ATPase activity. This Salmonella newport (strain SL254) protein is DNA mismatch repair protein MutS.